A 586-amino-acid chain; its full sequence is MFKVIKCNELNEKLIDKKVEINAWVKKIRHHGKFIFLNIRDRYEKAQVLVNEEKLLKIAEKIKLEYCIKIQGLLIKRPPNMINANMKTGHFEILAKNIEIISKCNELPFMIEDDNNASENSKLEYRYLDLRRDSLKNKIILRCQATHLIRNFLIKRKFLELETPTFVKSTPEGARDFVIPSRIHKGSFYALPQSPQLYKQLIMIAGFDKYFQIARCYRDEDSRGDRQPEFTQLDLEMSFVKKENIFKLIENMLFLIFKNCININLPKKFKKITYKKAMNKYGSDKPDTRFELELQDISRNLKNSEFNIFKDTLKNKGSIKILIVKDKADKFSRAKINNLEEIAKLYKTQGLYFTKIENNKFSGGIAKFLKTEEQELIKTYSLENNDIIFFTANNNWETACKAMGQIRIKIANDLGLIDENKFEFLWVYDFPLFEYDENTKTYSPAHHMFSLPKKQYIANLEKNPKKTIGEIYDLVLNGVELGSGSIRIHNKELQQRIFKIIGFQKEKSEDRFGFFLKALEYGAPNHGGIAIGIDRLIMLMTKSTSIKDVILFPKNSFAASPLDNSPSKISNEQLKELGINIVDGDN.

Glu-172 serves as a coordination point for L-aspartate. The interval 196 to 199 is aspartate; that stretch reads QLYK. Arg-218 lines the L-aspartate pocket. ATP contacts are provided by residues 218-220 and Gln-227; that span reads RDE. His-446 is an L-aspartate binding site. Glu-480 contributes to the ATP binding site. Arg-487 is an L-aspartate binding site. ATP is bound at residue 532–535; that stretch reads GIDR.

Belongs to the class-II aminoacyl-tRNA synthetase family. Type 1 subfamily. Homodimer.

Its subcellular location is the cytoplasm. It catalyses the reaction tRNA(Asx) + L-aspartate + ATP = L-aspartyl-tRNA(Asx) + AMP + diphosphate. Functionally, aspartyl-tRNA synthetase with relaxed tRNA specificity since it is able to aspartylate not only its cognate tRNA(Asp) but also tRNA(Asn). Reaction proceeds in two steps: L-aspartate is first activated by ATP to form Asp-AMP and then transferred to the acceptor end of tRNA(Asp/Asn). The chain is Aspartate--tRNA(Asp/Asn) ligase from Borreliella burgdorferi (strain ATCC 35210 / DSM 4680 / CIP 102532 / B31) (Borrelia burgdorferi).